A 166-amino-acid polypeptide reads, in one-letter code: Phosphopantetheine adenylyltransferase (166 aa).

A substrate-binding site is contributed by Ser-9. ATP-binding positions include 9–10 (SF) and His-17. Residues Lys-41, Thr-74, and Arg-88 each coordinate substrate. ATP contacts are provided by residues 89–91 (GLR), Glu-99, and 124–130 (DSFISSS).

Belongs to the bacterial CoaD family. As to quaternary structure, homohexamer. Requires Mg(2+) as cofactor.

It localises to the cytoplasm. The catalysed reaction is (R)-4'-phosphopantetheine + ATP + H(+) = 3'-dephospho-CoA + diphosphate. Its pathway is cofactor biosynthesis; coenzyme A biosynthesis; CoA from (R)-pantothenate: step 4/5. Reversibly transfers an adenylyl group from ATP to 4'-phosphopantetheine, yielding dephospho-CoA (dPCoA) and pyrophosphate. The protein is Phosphopantetheine adenylyltransferase of Lactobacillus johnsonii (strain CNCM I-12250 / La1 / NCC 533).